Reading from the N-terminus, the 293-residue chain is Glycine--tRNA ligase alpha subunit (293 aa).

Belongs to the class-II aminoacyl-tRNA synthetase family. In terms of assembly, tetramer of two alpha and two beta subunits.

The protein resides in the cytoplasm. The catalysed reaction is tRNA(Gly) + glycine + ATP = glycyl-tRNA(Gly) + AMP + diphosphate. In Wolinella succinogenes (strain ATCC 29543 / DSM 1740 / CCUG 13145 / JCM 31913 / LMG 7466 / NCTC 11488 / FDC 602W) (Vibrio succinogenes), this protein is Glycine--tRNA ligase alpha subunit.